A 266-amino-acid chain; its full sequence is Undecaprenyl-diphosphatase (266 aa).

8 consecutive transmembrane segments (helical) span residues 1–21 (MDTF…FLPI), 39–59 (QGLA…VLYF), 83–103 (SKLA…GFAL), 111–131 (LRGP…LWWA), 144–164 (TGWK…IPGT), 183–203 (AAAR…AILM), 218–238 (SLAL…HLFL), and 246–266 (MTPF…FIFM).

This sequence belongs to the UppP family.

The protein localises to the cell inner membrane. It catalyses the reaction di-trans,octa-cis-undecaprenyl diphosphate + H2O = di-trans,octa-cis-undecaprenyl phosphate + phosphate + H(+). Its function is as follows. Catalyzes the dephosphorylation of undecaprenyl diphosphate (UPP). Confers resistance to bacitracin. The polypeptide is Undecaprenyl-diphosphatase (Shewanella woodyi (strain ATCC 51908 / MS32)).